The following is a 799-amino-acid chain: Integrin beta-1 (799 aa).

The signal sequence occupies residues 1–20 (MNLQLVFWIGLISLICSVFG). At 21–729 (QTDKNRCLKA…ETPDCPTGPD (709 aa)) the chain is on the extracellular side. Residues 26 to 76 (RCLKANAKSCGECIQAGPNCGWCTNTTFLQEGMPTSARCDDLEALKKKGCH) enclose the PSI domain. 28 disulfides stabilise this stretch: Cys27/Cys45, Cys35/Cys465, Cys38/Cys64, Cys48/Cys75, Cys207/Cys213, Cys261/Cys301, Cys401/Cys415, Cys435/Cys463, Cys467/Cys487, Cys478/Cys490, Cys492/Cys501, Cys503/Cys534, Cys517/Cys532, Cys526/Cys537, Cys539/Cys554, Cys556/Cys577, Cys561/Cys575, Cys569/Cys580, Cys582/Cys591, Cys593/Cys616, Cys600/Cys614, Cys608/Cys619, Cys621/Cys631, Cys634/Cys637, Cys641/Cys692, Cys647/Cys666, Cys650/Cys662, and Cys700/Cys724. N-linked (GlcNAc...) asparagine glycosylation is found at Asn50, Asn94, and Asn97. The VWFA domain occupies 140-378 (DYPIDLYYLM…QLIIDAYNSL (239 aa)). Residues Ser152 and Ser154 each contribute to the Mg(2+) site. The Ca(2+) site is built by Ser154, Asp157, Asp158, and Glu189. Positions 207–213 (CTSEQNC) are CX3CL1-binding. The N-linked (GlcNAc...) asparagine glycan is linked to Asn212. 4 residues coordinate Ca(2+): Asn244, Asp246, Pro248, and Glu249. Glu249 provides a ligand contact to Mg(2+). Asn269 carries an N-linked (GlcNAc...) asparagine glycan. The CX3CL1-binding stretch occupies residues 295 to 314 (LPNDGQCHLENNVYTMSHYY). Gly362 is a binding site for Ca(2+). 3 N-linked (GlcNAc...) asparagine glycosylation sites follow: Asn363, Asn406, and Asn417. Residues 383–466 (ILENSKLPDG…VVLQFICKCN (84 aa)) form an interaction with TMEM182 region. I-EGF domains lie at 467–502 (CQSHGIPASPKCHEGNGTFECGACRCNEGRVGRHCE), 503–555 (CSTD…KFCE), 556–592 (CDNFNCDRSNGLICGGNGVCRCRVCECYPNYTGSACD), and 593–632 (CSLDTVPCVATNGQICNGRGICECGACKCTDPKFQGPTCE). Asn482 is a glycosylation site (N-linked (GlcNAc...) asparagine). Asn521 carries an N-linked (GlcNAc...) asparagine glycan. Asn585 is a glycosylation site (N-linked (GlcNAc...) asparagine). The N-linked (GlcNAc...) asparagine glycan is linked to Asn670. The helical transmembrane segment at 730-752 (IIPIVAGVVAGIVLIGLALLLIW) threads the bilayer. Residues 753–799 (KLLMIIHDRREFAKFEKEKMNAKWDTGENPIYKSAVTTVVNPKYEGK) lie on the Cytoplasmic side of the membrane. Positions 763–768 (EFAKFE) are signal for sorting from recycling endosomes; interaction with ACAP1. Thr778 carries the post-translational modification Phosphothreonine. Tyr784 is modified (phosphotyrosine). At Ser786 the chain carries Phosphoserine. The tract at residues 786-793 (SAVTTVVN) is interaction with ITGB1BP1. Thr790 is subject to Phosphothreonine. Lys795 is subject to N6-acetyllysine; alternate. A Glycyl lysine isopeptide (Lys-Gly) (interchain with G-Cter in SUMO1); alternate cross-link involves residue Lys795.

The protein belongs to the integrin beta chain family. In terms of assembly, interacts with seprase FAP (seprase); the interaction occurs at the cell surface of invadopodia membrane in a collagen-dependent manner. Heterodimer of an alpha and a beta subunit. Beta-1 associates with either alpha-1, alpha-2, alpha-3, alpha-4, alpha-5, alpha-6, alpha-7, alpha-8, alpha-9, alpha-10, alpha-11 or alpha-V. ITGA6:ITGB1 is found in a complex with CD9; interaction takes place in oocytes and is involved in sperm-egg fusion. Binds LGALS3BP and NMRK2, when associated with alpha-7, but not with alpha-5. Interacts with FLNA, FLNB, FLNC and RANBP9. Interacts with KRT1 in the presence of RACK1 and SRC. Interacts with JAML; integrin alpha-4/beta-1 may regulate leukocyte to endothelial cells adhesion by controlling JAML homodimerization. Interacts with RAB21. Interacts (via the cytoplasmic region) with RAB25 (via the hypervariable C-terminal region). Interacts with MYO10. Interacts with ITGB1BP1 (via C-terminal region); the interaction is a prerequisite for focal adhesion disassembly. Interacts with TLN1; the interaction is prevented by competitive binding of ITGB1BP1. Interacts with ACAP1; required for ITGB1 recycling. Interacts with ASAP3. Interacts with FERMT2; the interaction is inhibited in presence of ITGB1BP1. Interacts with DAB2. Interacts with FGR and HCK. Interacts with alpha-7A and alpha-7B in adult skeletal muscle. Interacts with alpha-7B in cardiomyocytes of adult heart. Interacts with EMP2; the interaction may be direct or indirect and ITGB1 has a heterodimer form. ITGA5:ITGB1 interacts with CCN3. ITGA4:ITGB1 is found in a ternary complex with CX3CR1 and CX3CL1. ITGA5:ITGB1 interacts with FBN1. ITGA5:ITGB1 acts as a receptor for fibronectin FN1 and mediates R-G-D-dependent cell adhesion to FN1. ITGA5:ITGB1 interacts with IL1B. Interacts with MDK. ITGA4:ITGB1 interacts with MDK; this interaction mediates MDK-induced osteoblast cells migration through PXN phosphorylation. ITGA6:ITGB1 interacts with MDK; this interaction mediates MDK-induced neurite-outgrowth. ITGA5:ITGB1 interacts with ACE2. Interacts with TMEM182 and LAMB1. Interacts with tensin TNS3; TNS3 also interacts with PEAK1, thus acting as an adapter molecule to bridge the association of PEAK1 with ITGB1. Interacts with tensin TNS4; the interaction displaces tensin TNS3 from the ITGB1 cytoplasmic tail and promotes ITGB1 stability. Integrin ITGA9:ITGB1 interacts with SPP1/OPN (via N-terminus). Integrin ITGA9:ITGB1 interacts with TNC/TNFN3 (via the 3rd Fibronectin type-III domain). Integrins ITGA4:ITGB1 and ITGA9:ITGB1 interact with SVEP1 (via Sushi domain 21); thereby inhibit Ca(2+) intracellular signaling and as a result repress vasocontraction. ITGA4:ITGB1 and ITGA5:ITGB1 interacts with SELP. ITGA5:ITGB1 interacts with IGFBP1. ITGA4:ITGB1 interacts with BCAM. Interacts with ADGRG6.

It is found in the cell membrane. The protein localises to the cell projection. The protein resides in the invadopodium membrane. It localises to the ruffle membrane. Its subcellular location is the recycling endosome. It is found in the melanosome. The protein localises to the lamellipodium. The protein resides in the ruffle. It localises to the cell junction. Its subcellular location is the focal adhesion. Its function is as follows. Integrins alpha-1/beta-1, alpha-2/beta-1, alpha-10/beta-1 and alpha-11/beta-1 are receptors for collagen. Integrins alpha-1/beta-1 and alpha-2/beta-2 recognize the proline-hydroxylated sequence G-F-P-G-E-R in collagen. Integrins alpha-2/beta-1, alpha-3/beta-1, alpha-4/beta-1, alpha-5/beta-1, alpha-8/beta-1, alpha-10/beta-1, alpha-11/beta-1 and alpha-V/beta-1 are receptors for fibronectin. Alpha-4/beta-1 recognizes one or more domains within the alternatively spliced CS-1 and CS-5 regions of fibronectin. Integrin alpha-5/beta-1 is a receptor for fibrinogen. Integrin alpha-1/beta-1, alpha-2/beta-1, alpha-6/beta-1 and alpha-7/beta-1 are receptors for lamimin. Integrin alpha-6/beta-1 (ITGA6:ITGB1) is present in oocytes and is involved in sperm-egg fusion. Integrin alpha-4/beta-1 is a receptor for VCAM1 and recognizes the sequence Q-I-D-S in VCAM1. Integrin alpha-9/beta-1 is a receptor for VCAM1, cytotactin and osteopontin. It recognizes the sequence A-E-I-D-G-I-E-L in cytotactin. Integrin alpha-3/beta-1 is a receptor for epiligrin, thrombospondin and CSPG4. Integrin alpha-3/beta-1 provides a docking site for FAP (seprase) at invadopodia plasma membranes in a collagen-dependent manner and hence may participate in the adhesion, formation of invadopodia and matrix degradation processes, promoting cell invasion. Alpha-3/beta-1 may mediate with LGALS3 the stimulation by CSPG4 of endothelial cells migration. Integrin alpha-V/beta-1 is a receptor for vitronectin. Beta-1 integrins recognize the sequence R-G-D in a wide array of ligands. When associated with alpha-7/beta-1 integrin, regulates cell adhesion and laminin matrix deposition. Involved in promoting endothelial cell motility and angiogenesis. Involved in osteoblast compaction through the fibronectin fibrillogenesis cell-mediated matrix assembly process and the formation of mineralized bone nodules. May be involved in up-regulation of the activity of kinases such as PKC via binding to KRT1. Together with KRT1 and RACK1, serves as a platform for SRC activation or inactivation. Plays a mechanistic adhesive role during telophase, required for the successful completion of cytokinesis. ITGA4:ITGB1 binds to fractalkine (CX3CL1) and may act as its coreceptor in CX3CR1-dependent fractalkine signaling. ITGA4:ITGB1 and ITGA5:ITGB1 bind to PLA2G2A via a site (site 2) which is distinct from the classical ligand-binding site (site 1) and this induces integrin conformational changes and enhanced ligand binding to site 1. ITGA5:ITGB1 acts as a receptor for fibrillin-1 (FBN1) and mediates R-G-D-dependent cell adhesion to FBN1. ITGA5:ITGB1 is a receptor for IL1B and binding is essential for IL1B signaling. ITGA5:ITGB3 is a receptor for soluble CD40LG and is required for CD40/CD40LG signaling. Plays an important role in myoblast differentiation and fusion during skeletal myogenesis. ITGA9:ITGB1 may play a crucial role in SVEP1/polydom-mediated myoblast cell adhesion. Integrins ITGA9:ITGB1 and ITGA4:ITGB1 repress PRKCA-mediated L-type voltage-gated channel Ca(2+) influx and ROCK-mediated calcium sensitivity in vascular smooth muscle cells via their interaction with SVEP1, thereby inhibit vasocontraction. This chain is Integrin beta-1 (Itgb1), found in Rattus norvegicus (Rat).